A 301-amino-acid polypeptide reads, in one-letter code: m7GpppX diphosphatase (301 aa).

Substrate contacts are provided by residues Glu-154, Lys-176, and 237–248; that span reads HYQPSFYHLHVH. Residues 244–248 carry the Histidine triad motif motif; that stretch reads HLHVH. The Nucleophile role is filled by His-246.

The protein belongs to the HIT family.

It localises to the nucleus. The enzyme catalyses a 5'-end (N(7)-methyl 5'-triphosphoguanosine)-ribonucleoside in mRNA + H2O = N(7)-methyl-GMP + a 5'-end diphospho-ribonucleoside in mRNA + 2 H(+). It catalyses the reaction a 5'-end (N(2),N(2),N(7)-trimethyl 5'-triphosphoguanosine)-ribonucleoside in mRNA + H2O = (N(2),N(2),N(7))-trimethyl-GMP + a 5'-end diphospho-ribonucleoside in mRNA + 2 H(+). The hydrolytic product 7-methylguanosine diphosphate (m7GDP) efficiently inhibits the decapping scavenger activity and acts as a competitive inhibitor in vitro. Its function is as follows. Decapping scavenger enzyme that catalyzes the cleavage of a residual cap structure following the degradation of mRNAs of the 3'-&gt;5' exosome-mediated mRNA decay pathway. Hydrolyzes cap analog structures like 7-methylguanosine nucleoside triphosphate (m7GpppG) and tri-methyl guanosine nucleoside triphosphate (m3(2,2,7)GpppG) with up to 2 nucleotide substrates (small capped oligoribonucleotides) and specifically releases 5'-phosphorylated RNA fragments and 7-methylguanosine monophosphate (m7GMP). Does not hydrolyze unmethylated cap analog (GpppG) and shows no decapping activity on intact m7GpppG-capped mRNA molecules. Does not hydrolyze 7-methylguanosine diphosphate (m7GDP) and tri-methylguanosine diphosphate (m3(2,2,7)GDP) to m(7)GMP and m3(2,2,7)GMP, respectively. May also play a role in the 5'-&gt;3 mRNA decay pathway; m7GDP, the downstream product released by the 5'-&gt;3' mRNA mediated decapping activity, may be also converted by dcs-1 to m7GMP. Binds to m7GpppG and strongly to m7GDP. The sequence is that of m7GpppX diphosphatase from Ascaris suum (Pig roundworm).